Reading from the N-terminus, the 258-residue chain is Imidazole glycerol phosphate synthase subunit HisF (258 aa).

Catalysis depends on residues Asp-11 and Asp-130.

This sequence belongs to the HisA/HisF family. In terms of assembly, heterodimer of HisH and HisF.

It is found in the cytoplasm. It carries out the reaction 5-[(5-phospho-1-deoxy-D-ribulos-1-ylimino)methylamino]-1-(5-phospho-beta-D-ribosyl)imidazole-4-carboxamide + L-glutamine = D-erythro-1-(imidazol-4-yl)glycerol 3-phosphate + 5-amino-1-(5-phospho-beta-D-ribosyl)imidazole-4-carboxamide + L-glutamate + H(+). It participates in amino-acid biosynthesis; L-histidine biosynthesis; L-histidine from 5-phospho-alpha-D-ribose 1-diphosphate: step 5/9. IGPS catalyzes the conversion of PRFAR and glutamine to IGP, AICAR and glutamate. The HisF subunit catalyzes the cyclization activity that produces IGP and AICAR from PRFAR using the ammonia provided by the HisH subunit. The chain is Imidazole glycerol phosphate synthase subunit HisF from Enterobacter sp. (strain 638).